The following is a 373-amino-acid chain: Glutamate 5-kinase (373 aa).

Lys-15 lines the ATP pocket. The substrate site is built by Ser-55, Asp-142, and Asn-154. ATP contacts are provided by residues 174–175 (TD) and 216–222 (TGGMATK). The PUA domain occupies 281-359 (AGRIIVDDGA…SRIEAILGYR (79 aa)).

It belongs to the glutamate 5-kinase family.

The protein localises to the cytoplasm. The enzyme catalyses L-glutamate + ATP = L-glutamyl 5-phosphate + ADP. Its pathway is amino-acid biosynthesis; L-proline biosynthesis; L-glutamate 5-semialdehyde from L-glutamate: step 1/2. Functionally, catalyzes the transfer of a phosphate group to glutamate to form L-glutamate 5-phosphate. The chain is Glutamate 5-kinase from Pelobacter propionicus (strain DSM 2379 / NBRC 103807 / OttBd1).